Here is a 137-residue protein sequence, read N- to C-terminus: Large ribosomal subunit protein uL16 (137 aa).

This sequence belongs to the universal ribosomal protein uL16 family. Part of the 50S ribosomal subunit.

Functionally, binds 23S rRNA and is also seen to make contacts with the A and possibly P site tRNAs. The chain is Large ribosomal subunit protein uL16 from Hydrogenovibrio crunogenus (strain DSM 25203 / XCL-2) (Thiomicrospira crunogena).